A 363-amino-acid polypeptide reads, in one-letter code: G-protein coupled receptor 4 (363 aa).

Over 1–8 the chain is Extracellular; the sequence is MGNGTWEG. Residue N3 is glycosylated (N-linked (GlcNAc...) asparagine). A helical transmembrane segment spans residues 9-45; sequence CHVDSRVDHLFPPSLYIFVIGVGLPTNCLALWAAYRQ. Intrachain disulfides connect C9-C258 and C90-C168. Residues 46–49 are Cytoplasmic-facing; sequence VRQR. A helical transmembrane segment spans residues 50-80; it reads NELGVYLMNLSIADLLYICTLPLWVDYFLHH. At 81–85 the chain is on the extracellular side; sequence DNWIH. A helical membrane pass occupies residues 86–121; it reads GPGSCKLFGFIFYTNIYISIAFLCCISVDRYLAVAH. Topologically, residues 122–129 are cytoplasmic; it reads PLRFARLR. Residues 130-156 traverse the membrane as a helical segment; it reads RVKTAVAVSSVVWATELGANSVPLFHD. Residues 157–172 lie on the Extracellular side of the membrane; sequence ELFRDRYNHTFCFEKF. The segment at 157–172 is extracellular loop 2 (ECL2); it reads ELFRDRYNHTFCFEKF. A glycan (N-linked (GlcNAc...) asparagine) is linked at N164. Residues 173 to 210 traverse the membrane as a helical segment; sequence PMEGWVAWMNLYRVFVGFLFPWALMLLSYRGILRAVRG. Over 211–214 the chain is Cytoplasmic; it reads SVST. The helical transmembrane segment at 215–250 threads the bilayer; that stretch reads ERQEKAKIKRLALSLIAIVLVCFAPYHVLLLSRSAV. Residues 251 to 260 lie on the Extracellular side of the membrane; the sequence is YLGHPWDCGF. Residues 261 to 289 traverse the membrane as a helical segment; that stretch reads EERVFSAYHSSLAFTSLNCVADPILYCLV. Over 290–363 the chain is Cytoplasmic; it reads NEGARSDVAK…QLKMLPPPAP (74 aa). Residues 344–363 are disordered; sequence ASPPSQGDQVQLKMLPPPAP.

The protein belongs to the G-protein coupled receptor 1 family.

It is found in the cell membrane. Activated by a network of residues that connects an extracellular-facing cavity to Glu-145, a conserved charged residue buried in the transmembrane core of the receptor. Protonation likely drives conformational changes in extracellular loop 2 (ECL2), which stabilizes movement of transmembrane 3 (TM3) and a series of rearrangements that connect the extracellular-facing cavity to Glu-145, a residue only conserved in proton-sensing G-protein coupled receptors. In terms of biological role, proton-sensing G-protein coupled receptor activated by extracellular pH, which is required to monitor pH changes and generate adaptive reactions. Activated by an optimal pH of 6.8-7.2. Ligand binding causes a conformation change that triggers signaling via guanine nucleotide-binding proteins (G proteins) and modulates the activity of downstream effectors, such as adenylate cyclase. GPR4 is mainly coupled to G(s) G proteins and mediates activation of adenylate cyclase activity. May also couple with G(q) and G(12)/G(13) G proteins. Acts as a key regulator of respiratory sensitivity to CO2/H(+) in brain retrotrapezoid nucleus neurons: acts by mediating detection of protons generated by the formation of carbonic acid in the blood, an important mechanism to impulse to breathe. Also acts as a regulator of acid secretion in the kidney collecting duct by maintaining acid-base homeostasis in the kidney. Acidosis-induced GPR4 activation increases paracellular gap formation and permeability of vascular endothelial cells, possibly through the G(12)/G(13)/Rho GTPase signaling pathway. The protein is G-protein coupled receptor 4 (GPR4) of Sus scrofa (Pig).